We begin with the raw amino-acid sequence, 106 residues long: Malonate decarboxylase acyl carrier protein (106 aa).

At Ser-28 the chain carries O-(phosphoribosyl dephospho-coenzyme A)serine.

It belongs to the MdcC family. In terms of processing, covalently binds the prosthetic group of malonate decarboxylase.

The protein resides in the cytoplasm. Subunit of malonate decarboxylase, it is an acyl carrier protein to which acetyl and malonyl thioester residues are bound via a 2'-(5''-phosphoribosyl)-3'-dephospho-CoA prosthetic group and turn over during the catalytic mechanism. This is Malonate decarboxylase acyl carrier protein from Stenotrophomonas maltophilia (strain K279a).